We begin with the raw amino-acid sequence, 512 residues long: Glutathione-binding protein GsiB (512 aa).

Positions 1 to 26 (MARAVHRSGLVALGIATALMASCAFA) are cleaved as a signal peptide.

Belongs to the bacterial solute-binding protein 5 family. The complex is composed of two ATP-binding proteins (GsiA), two transmembrane proteins (GsiC and GsiD) and a solute-binding protein (GsiB).

Its subcellular location is the periplasm. Part of the ABC transporter complex GsiABCD involved in glutathione import. Binds glutathione. In Shigella flexneri, this protein is Glutathione-binding protein GsiB.